Here is a 380-residue protein sequence, read N- to C-terminus: Flap endonuclease 1 (380 aa).

An N-domain region spans residues methionine 1–arginine 104. Arginine 19 bears the Symmetric dimethylarginine; by PRMT5 mark. Aspartate 34 contacts Mg(2+). Residues arginine 47 and arginine 70 each coordinate DNA. The residue at position 80 (lysine 80) is an N6-acetyllysine. Aspartate 86 serves as a coordination point for Mg(2+). Symmetric dimethylarginine; by PRMT5 occurs at positions 100 and 104. The tract at residues glutamate 122 to histidine 253 is I-domain. The Mg(2+) site is built by glutamate 158, glutamate 160, aspartate 179, and aspartate 181. DNA is bound at residue glutamate 158. At serine 187 the chain carries Phosphoserine; by CDK2. A Symmetric dimethylarginine; by PRMT5 modification is found at arginine 192. A Phosphoserine modification is found at serine 197. DNA contacts are provided by glycine 231 and aspartate 233. Residue aspartate 233 coordinates Mg(2+). A phosphoserine mark is found at serine 255, serine 293, and serine 335. Residue threonine 336 is modified to Phosphothreonine. Positions threonine 336 to phenylalanine 344 are interaction with PCNA. A disordered region spans residues serine 349–lysine 380. Residues lysine 354, lysine 375, lysine 377, and lysine 380 each carry the N6-acetyllysine modification. Residues alanine 363–lysine 380 show a composition bias toward basic residues.

This sequence belongs to the XPG/RAD2 endonuclease family. FEN1 subfamily. Interacts with PCNA. Three molecules of FEN1 bind to one PCNA trimer with each molecule binding to one PCNA monomer. PCNA stimulates the nuclease activity without altering cleavage specificity. The C-terminal domain binds EP300; can bind simultaneously to both PCNA and EP300. Interacts with DDX11; this interaction is direct and increases flap endonuclease activity of FEN1. Interacts with WDR4; regulating its endonuclease activity. Interacts with POLB. It depends on Mg(2+) as a cofactor. Acetylated by EP300. Acetylation inhibits both endonuclease and exonuclease activity. Acetylation also reduces DNA-binding activity but does not affect interaction with PCNA or EP300. Post-translationally, phosphorylation upon DNA damage induces relocalization to the nuclear plasma. Phosphorylation at Ser-187 by CDK2 occurs during late S-phase and results in dissociation from PCNA. In terms of processing, methylation at Arg-192 by PRMT5 impedes Ser-187 phosphorylation and increases interaction with PCNA.

The protein resides in the nucleus. The protein localises to the nucleolus. Its subcellular location is the nucleoplasm. It localises to the mitochondrion. Functionally, structure-specific nuclease with 5'-flap endonuclease and 5'-3' exonuclease activities involved in DNA replication and repair. During DNA replication, cleaves the 5'-overhanging flap structure that is generated by displacement synthesis when DNA polymerase encounters the 5'-end of a downstream Okazaki fragment. It enters the flap from the 5'-end and then tracks to cleave the flap base, leaving a nick for ligation. Also involved in the long patch base excision repair (LP-BER) pathway, by cleaving within the apurinic/apyrimidinic (AP) site-terminated flap. Acts as a genome stabilization factor that prevents flaps from equilibrating into structures that lead to duplications and deletions. Also possesses 5'-3' exonuclease activity on nicked or gapped double-stranded DNA, and exhibits RNase H activity. Also involved in replication and repair of rDNA and in repairing mitochondrial DNA. The polypeptide is Flap endonuclease 1 (Ovis aries (Sheep)).